The primary structure comprises 446 residues: Eukaryotic translation initiation factor 3 subunit E (446 aa).

The PCI domain occupies 240 to 420 (PLFNDENSRE…GTVVMNHPNS (181 aa)).

This sequence belongs to the eIF-3 subunit E family. Component of the eukaryotic translation initiation factor 3 (eIF-3) complex.

It localises to the cytoplasm. In terms of biological role, component of the eukaryotic translation initiation factor 3 (eIF-3) complex, which is involved in protein synthesis of a specialized repertoire of mRNAs and, together with other initiation factors, stimulates binding of mRNA and methionyl-tRNAi to the 40S ribosome. The eIF-3 complex specifically targets and initiates translation of a subset of mRNAs involved in cell proliferation. The polypeptide is Eukaryotic translation initiation factor 3 subunit E (Pyricularia oryzae (strain 70-15 / ATCC MYA-4617 / FGSC 8958) (Rice blast fungus)).